The following is a 222-amino-acid chain: Deoxyribose-phosphate aldolase (222 aa).

Residue aspartate 94 is the Proton donor/acceptor of the active site. Lysine 156 acts as the Schiff-base intermediate with acetaldehyde in catalysis. The active-site Proton donor/acceptor is the lysine 185.

It belongs to the DeoC/FbaB aldolase family. DeoC type 1 subfamily.

It localises to the cytoplasm. It carries out the reaction 2-deoxy-D-ribose 5-phosphate = D-glyceraldehyde 3-phosphate + acetaldehyde. It functions in the pathway carbohydrate degradation; 2-deoxy-D-ribose 1-phosphate degradation; D-glyceraldehyde 3-phosphate and acetaldehyde from 2-deoxy-alpha-D-ribose 1-phosphate: step 2/2. Functionally, catalyzes a reversible aldol reaction between acetaldehyde and D-glyceraldehyde 3-phosphate to generate 2-deoxy-D-ribose 5-phosphate. In Malacoplasma penetrans (strain HF-2) (Mycoplasma penetrans), this protein is Deoxyribose-phosphate aldolase.